We begin with the raw amino-acid sequence, 215 residues long: RWD domain-containing protein C1393.09c (215 aa).

The region spanning 7-114 (EEREILESIY…SVAKEETNAI (108 aa)) is the RWD domain.

The protein localises to the cytoplasm. It localises to the nucleus. The chain is RWD domain-containing protein C1393.09c from Schizosaccharomyces pombe (strain 972 / ATCC 24843) (Fission yeast).